Reading from the N-terminus, the 173-residue chain is Small ribosomal subunit protein uS4c (173 aa).

The 62-residue stretch at 94–155 (SRLDSKIYRS…TKLTSELIEK (62 aa)) folds into the S4 RNA-binding domain.

It belongs to the universal ribosomal protein uS4 family. As to quaternary structure, part of the 30S ribosomal subunit. Contacts protein S5. The interaction surface between S4 and S5 is involved in control of translational fidelity.

Its subcellular location is the plastid. Its function is as follows. One of the primary rRNA binding proteins, it binds directly to 16S rRNA where it nucleates assembly of the body of the 30S subunit. With S5 and S12 plays an important role in translational accuracy. In Helicosporidium sp. subsp. Simulium jonesii (Green alga), this protein is Small ribosomal subunit protein uS4c (rps4).